The chain runs to 371 residues: tRNA-specific 2-thiouridylase MnmA (371 aa).

ATP contacts are provided by residues 13 to 20 and methionine 39; that span reads GMSGGVDS. Residues 99-101 form an interaction with target base in tRNA region; that stretch reads NPD. The active-site Nucleophile is the cysteine 104. A disulfide bond links cysteine 104 and cysteine 200. Glycine 128 provides a ligand contact to ATP. Residues 150–152 form an interaction with tRNA region; that stretch reads KDQ. Residue cysteine 200 is the Cysteine persulfide intermediate of the active site. The interval 308-309 is interaction with tRNA; the sequence is RY.

Belongs to the MnmA/TRMU family.

The protein localises to the cytoplasm. It carries out the reaction S-sulfanyl-L-cysteinyl-[protein] + uridine(34) in tRNA + AH2 + ATP = 2-thiouridine(34) in tRNA + L-cysteinyl-[protein] + A + AMP + diphosphate + H(+). In terms of biological role, catalyzes the 2-thiolation of uridine at the wobble position (U34) of tRNA, leading to the formation of s(2)U34. This chain is tRNA-specific 2-thiouridylase MnmA, found in Bacillus anthracis.